The sequence spans 297 residues: MVEVRVPATSANIGPGFDCLGVAVNMYNKFFVEEIEEGLIFEGCADKFKNENNLIYVAMKKCFNKIGYKPTGLRIKIESDIPVSRGLGSSAACVVGGIVSANELAGGALNKKELLDLAVEVEGHPDNVNPAFCGGMTASISDNREVIYSKVKVSEGIKFCALIPDFTLSTEKARAVLPKSIDYKDGIFNVGRTALMISALNNGDFHLIKYACKDKLHQDHRAKLIENFYSIKKQCEKLNSLGVFLSGAGPTIMVMLREEDKDFSKNIKSFLETLKNKWEVRELKIDKLGTVVNNRKV.

Position 82–92 (82–92 (PVSRGLGSSAA)) interacts with ATP.

It belongs to the GHMP kinase family. Homoserine kinase subfamily.

It localises to the cytoplasm. It catalyses the reaction L-homoserine + ATP = O-phospho-L-homoserine + ADP + H(+). The protein operates within amino-acid biosynthesis; L-threonine biosynthesis; L-threonine from L-aspartate: step 4/5. Functionally, catalyzes the ATP-dependent phosphorylation of L-homoserine to L-homoserine phosphate. The chain is Homoserine kinase from Clostridium botulinum (strain Loch Maree / Type A3).